A 344-amino-acid chain; its full sequence is Estradiol 17-beta-dehydrogenase 1 (344 aa).

3–32 (STVVLITGCSSGIGLHLAVRLASDRSQSFK) serves as a coordination point for NAD(+). Ser-143 provides a ligand contact to substrate. Tyr-156 serves as the catalytic Proton acceptor.

The protein belongs to the short-chain dehydrogenases/reductases (SDR) family. Homodimer.

It localises to the cytoplasm. It carries out the reaction 17beta-estradiol + NAD(+) = estrone + NADH + H(+). It catalyses the reaction 17beta-estradiol + NADP(+) = estrone + NADPH + H(+). The protein operates within steroid biosynthesis; estrogen biosynthesis. Its function is as follows. Favors the reduction of estrogens and androgens. Uses preferentially NADH. The polypeptide is Estradiol 17-beta-dehydrogenase 1 (Hsd17b1) (Rattus norvegicus (Rat)).